The chain runs to 125 residues: Major intrinsically disordered NOTCH2-binding receptor 1-like (125 aa).

Residue Asn-37 is glycosylated (N-linked (GlcNAc...) asparagine). A helical membrane pass occupies residues 100 to 120; that stretch reads FAFITLFVCAVVIIITVPIVV.

The protein belongs to the MINAR family. As to quaternary structure, interacts with NOTCH2. In terms of tissue distribution, highly expressed in the auditory hair cells.

It is found in the lysosome membrane. The protein localises to the endoplasmic reticulum membrane. In terms of biological role, binds cholesterol and may regulate the distribution and homeostasis of cholesterol in hair cells. May play a role in angiogenesis. This Danio rerio (Zebrafish) protein is Major intrinsically disordered NOTCH2-binding receptor 1-like.